The primary structure comprises 368 residues: Phosphate acyltransferase (368 aa).

Residues 334 to 368 (AAPLGESGRDADGAGQASPSAGQPAEPSAALSSKT) are disordered.

It belongs to the PlsX family. As to quaternary structure, homodimer. Probably interacts with PlsY.

The protein resides in the cytoplasm. It carries out the reaction a fatty acyl-[ACP] + phosphate = an acyl phosphate + holo-[ACP]. The protein operates within lipid metabolism; phospholipid metabolism. Its function is as follows. Catalyzes the reversible formation of acyl-phosphate (acyl-PO(4)) from acyl-[acyl-carrier-protein] (acyl-ACP). This enzyme utilizes acyl-ACP as fatty acyl donor, but not acyl-CoA. The sequence is that of Phosphate acyltransferase from Burkholderia thailandensis (strain ATCC 700388 / DSM 13276 / CCUG 48851 / CIP 106301 / E264).